The following is a 327-amino-acid chain: GTPase Obg (327 aa).

Residues 1-159 (MQFIDQANII…WEVQLELKLL (159 aa)) form the Obg domain. An OBG-type G domain is found at 160 to 327 (AEVGIIGLPN…SLLSEVWKRI (168 aa)). ATP contacts are provided by residues 166 to 173 (GLPNAGKS), 191 to 195 (FTTLI), 213 to 216 (DIPG), 280 to 283 (NKME), and 309 to 311 (SSS). The Mg(2+) site is built by Ser-173 and Thr-193.

The protein belongs to the TRAFAC class OBG-HflX-like GTPase superfamily. OBG GTPase family. As to quaternary structure, monomer. The cofactor is Mg(2+).

The protein localises to the cytoplasm. An essential GTPase which binds GTP, GDP and possibly (p)ppGpp with moderate affinity, with high nucleotide exchange rates and a fairly low GTP hydrolysis rate. Plays a role in control of the cell cycle, stress response, ribosome biogenesis and in those bacteria that undergo differentiation, in morphogenesis control. This Prochlorococcus marinus (strain MIT 9215) protein is GTPase Obg.